Reading from the N-terminus, the 240-residue chain is 4-hydroxy-tetrahydrodipicolinate reductase (240 aa).

Residues 79–81 (ATT) and 103–106 (SANM) each bind NAD(+). His-135 (proton donor/acceptor) is an active-site residue. His-136 contacts (S)-2,3,4,5-tetrahydrodipicolinate. Catalysis depends on Lys-139, which acts as the Proton donor. Residue 145 to 146 (GT) participates in (S)-2,3,4,5-tetrahydrodipicolinate binding.

It belongs to the DapB family.

Its subcellular location is the cytoplasm. The enzyme catalyses (S)-2,3,4,5-tetrahydrodipicolinate + NAD(+) + H2O = (2S,4S)-4-hydroxy-2,3,4,5-tetrahydrodipicolinate + NADH + H(+). It carries out the reaction (S)-2,3,4,5-tetrahydrodipicolinate + NADP(+) + H2O = (2S,4S)-4-hydroxy-2,3,4,5-tetrahydrodipicolinate + NADPH + H(+). The protein operates within amino-acid biosynthesis; L-lysine biosynthesis via DAP pathway; (S)-tetrahydrodipicolinate from L-aspartate: step 4/4. Its function is as follows. Catalyzes the conversion of 4-hydroxy-tetrahydrodipicolinate (HTPA) to tetrahydrodipicolinate. This chain is 4-hydroxy-tetrahydrodipicolinate reductase, found in Staphylococcus aureus (strain Mu3 / ATCC 700698).